Reading from the N-terminus, the 227-residue chain is Ribosomal RNA large subunit methyltransferase E (227 aa).

5 residues coordinate S-adenosyl-L-methionine: Gly78, Trp80, Asp103, Asp119, and Asp143. Lys183 (proton acceptor) is an active-site residue.

It belongs to the class I-like SAM-binding methyltransferase superfamily. RNA methyltransferase RlmE family.

It localises to the cytoplasm. It catalyses the reaction uridine(2552) in 23S rRNA + S-adenosyl-L-methionine = 2'-O-methyluridine(2552) in 23S rRNA + S-adenosyl-L-homocysteine + H(+). Its function is as follows. Specifically methylates the uridine in position 2552 of 23S rRNA at the 2'-O position of the ribose in the fully assembled 50S ribosomal subunit. The sequence is that of Ribosomal RNA large subunit methyltransferase E from Rickettsia africae (strain ESF-5).